We begin with the raw amino-acid sequence, 379 residues long: uncharacterized protein (379 aa).

This sequence belongs to the herpesviridae US22 family.

This is an uncharacterized protein from Human cytomegalovirus (strain AD169) (HHV-5).